An 84-amino-acid polypeptide reads, in one-letter code: uncharacterized protein (84 aa).

Belongs to the chlamydial CPn_0711/CT_665/TC_0036 family.

This is an uncharacterized protein from Chlamydia muridarum (strain MoPn / Nigg).